A 116-amino-acid polypeptide reads, in one-letter code: DNA-directed RNA polymerase subunit omega (116 aa).

This sequence belongs to the RNA polymerase subunit omega family. The RNAP catalytic core consists of 2 alpha, 1 beta, 1 beta' and 1 omega subunit. When a sigma factor is associated with the core the holoenzyme is formed, which can initiate transcription.

The catalysed reaction is RNA(n) + a ribonucleoside 5'-triphosphate = RNA(n+1) + diphosphate. Functionally, promotes RNA polymerase assembly. Latches the N- and C-terminal regions of the beta' subunit thereby facilitating its interaction with the beta and alpha subunits. The chain is DNA-directed RNA polymerase subunit omega from Hyphomonas neptunium (strain ATCC 15444).